Reading from the N-terminus, the 605-residue chain is Probable potassium transport system protein Kup 2 (605 aa).

The next 12 membrane-spanning stretches (helical) occupy residues 17–37 (GLVF…IMTL), 45–65 (VLGI…VEYA), 96–116 (MAFA…DGVI), 139–159 (AQGG…IFQF), 169–189 (FGPI…VSII), 211–231 (GLAG…GEAL), 246–266 (AWYF…AFIL), 286–306 (LYIP…QALI), 338–358 (IYIG…MILF), 367–387 (AYGL…TMIF), 394–414 (WKVP…TANL), and 417–437 (LPHG…IMVI).

The protein belongs to the HAK/KUP transporter (TC 2.A.72) family.

It localises to the cell inner membrane. The enzyme catalyses K(+)(in) + H(+)(in) = K(+)(out) + H(+)(out). Transport of potassium into the cell. Likely operates as a K(+):H(+) symporter. The protein is Probable potassium transport system protein Kup 2 of Geobacter sulfurreducens (strain ATCC 51573 / DSM 12127 / PCA).